We begin with the raw amino-acid sequence, 650 residues long: 1-deoxy-D-xylulose-5-phosphate synthase (650 aa).

Residues 1–13 (MSKIKNDKRETGH) are compositionally biased toward basic and acidic residues. The segment at 1–23 (MSKIKNDKRETGHLKSPPETPLL) is disordered. Thiamine diphosphate contacts are provided by residues His92 and 133–135 (AHS). Asp164 provides a ligand contact to Mg(2+). Thiamine diphosphate contacts are provided by residues 165-166 (GA), Asn193, Tyr302, and Glu384. Asn193 lines the Mg(2+) pocket.

Belongs to the transketolase family. DXPS subfamily. In terms of assembly, homodimer. The cofactor is Mg(2+). Requires thiamine diphosphate as cofactor.

The catalysed reaction is D-glyceraldehyde 3-phosphate + pyruvate + H(+) = 1-deoxy-D-xylulose 5-phosphate + CO2. It functions in the pathway metabolic intermediate biosynthesis; 1-deoxy-D-xylulose 5-phosphate biosynthesis; 1-deoxy-D-xylulose 5-phosphate from D-glyceraldehyde 3-phosphate and pyruvate: step 1/1. Catalyzes the acyloin condensation reaction between C atoms 2 and 3 of pyruvate and glyceraldehyde 3-phosphate to yield 1-deoxy-D-xylulose-5-phosphate (DXP). In Chelativorans sp. (strain BNC1), this protein is 1-deoxy-D-xylulose-5-phosphate synthase.